A 94-amino-acid polypeptide reads, in one-letter code: Small ribosomal subunit protein uS19 (94 aa).

It belongs to the universal ribosomal protein uS19 family.

Functionally, protein S19 forms a complex with S13 that binds strongly to the 16S ribosomal RNA. The sequence is that of Small ribosomal subunit protein uS19 from Clostridium botulinum (strain Hall / ATCC 3502 / NCTC 13319 / Type A).